The chain runs to 156 residues: MFNVVLVAPEIPPNTGNVIRLCANTGAHLHLIEPLGFPLDDARMRRAGLDYHEYAQMRVHRDWDAFVAAETPDPARMFAFTTRGSGRFHDHAFLSGDWFVFGSETRGLPAELLERFPNEQRVRLPMRPDNRSLNLSNTVAVVVFEAWRQAGFEGGA.

S-adenosyl-L-methionine-binding residues include G102, L124, and S132.

Belongs to the class IV-like SAM-binding methyltransferase superfamily. RNA methyltransferase TrmH family. TrmL subfamily. In terms of assembly, homodimer.

Its subcellular location is the cytoplasm. It carries out the reaction cytidine(34) in tRNA + S-adenosyl-L-methionine = 2'-O-methylcytidine(34) in tRNA + S-adenosyl-L-homocysteine + H(+). The catalysed reaction is 5-carboxymethylaminomethyluridine(34) in tRNA(Leu) + S-adenosyl-L-methionine = 5-carboxymethylaminomethyl-2'-O-methyluridine(34) in tRNA(Leu) + S-adenosyl-L-homocysteine + H(+). Its function is as follows. Methylates the ribose at the nucleotide 34 wobble position in the two leucyl isoacceptors tRNA(Leu)(CmAA) and tRNA(Leu)(cmnm5UmAA). Catalyzes the methyl transfer from S-adenosyl-L-methionine to the 2'-OH of the wobble nucleotide. The protein is tRNA (cytidine(34)-2'-O)-methyltransferase of Burkholderia cenocepacia (strain HI2424).